Consider the following 199-residue polypeptide: CASP-like protein 4C1 (199 aa).

Residues 1–35 (MESGSVANDSGPLNSTPDVHLYGKTAAMKQRRSNT) are Cytoplasmic-facing. The helical transmembrane segment at 36 to 56 (MLFVFRLLTFSFSLAAVLVMG) threads the bilayer. The Extracellular portion of the chain corresponds to 57-80 (TNKQKIRSAPQYLEVAWHDFDPFR). A helical transmembrane segment spans residues 81-101 (YVFAVNAIICVYSFVETWLAV). The Cytoplasmic segment spans residues 102–124 (YTLSRGTLLLPETFQVWFDYGHD). The helical transmembrane segment at 125 to 145 (QGFACLLFSANSVGIAMAQLL) threads the bilayer. The Extracellular segment spans residues 146-169 (QSGSTLIQGQYYCSDAGAYCTQAR). A helical transmembrane segment spans residues 170 to 190 (VSIAMGFGAFLFLALSSFLTG). Over 191–199 (LRVARWYLP) the chain is Cytoplasmic.

Belongs to the Casparian strip membrane proteins (CASP) family. In terms of assembly, homodimer and heterodimers.

The protein localises to the cell membrane. The polypeptide is CASP-like protein 4C1 (Physcomitrium patens (Spreading-leaved earth moss)).